The chain runs to 1691 residues: MPETASTANVLPKSDPDAIKTEQDALEGYENGGDALQGTMDGHVETNGDAPATENHHEPNHIHDDERPAKRRRTRDSTPPQNTPKKMKPVSPPWKKISADGPTSYTENGRRKSGRINTLLPEPSPLSKSRTSKRSTGANSNTKTEIHLTNGNSRKMPNGSHKASPATKAPSKQAPASTPKSASKKPTETRTSSRSTRRRSPTPPPPPKNSTRSRRSARFSDAVIKDEAVQDSRTATSNSTNRSPRIKLRVGRSGHIPLVHPGQVRKRPKIGTSFEDFWTRAGDIPVEEGGLQASEDGPQYTDELAERDARVILRVEKEVEDGGMLSQGRCSIFLPEPAEEPPRQWARQDHMVKAMTNFRKLMLAEQQRHRIAAKKVAEACRDEWLRRQPKSEEEIEAEQRAVWISRYRIVAKTLFGTWENVRTEVNRRRLAEWEQEEQRRVKAALNEAVNLSEQKLQARQAGLDSEQLSEEDGFDDLSDDMSMADDDELGLASGEDEDDEDGDADSDIMSSDEEEGDEEDQKDIGDENLTQEQLRAKYAHIPELEKPSTETPVTEPTPKDTDAVDTAQATATENAETSDESVDMDDDMGSTDMDSDEEDEEEESEEESDEDAGGLLGLLFGKSELKKMNSEAVAETPADSKEDSEMPDVEAVSDGEGAEENEMSLIQMPDPEPHESGALEKSTKEAVEEKEQIPAAMQDVAAGQDGLSNTDNNVQEPASQDNDVAMTGNDPEEPSALTFEKPHSPATEPATNPPSRVHSTSPPATSETKPSELDTASTEEMAVDKHDTSRSPSPQPSNHKIEVPFLLRGTLREYQRDGLDWLAGLYANSTNGILADEMGLGKTIQTIALLAHLACTHEVWGPHLVIVPTSVMLNWEMEFKKWCPGFKILAYYGSQEERKRKRQGWNNDDIWNVCITSYQLVLQDQQVFKRRRWHYMILDEAHNIKNFKSQRWQTLLGFNTQARLLLTGTPLQNNLTELWSLLFFLMPAENGVGGFADLQEFHDWFAKPESQILESGREQMDDEARAIISKLHKVLRPYLLRRLKADVEKQMPAKYEHVEFCRLSKRQRELYDGFLSRTDTKETLNSGNYLSIINCLMQLRKVCNHPDLFVDRPIMTSFRMQKSVVSDFEVTEQRVQRLLHDPSPMKDVSLGFLNLMPTQCESLSTTQAERISQLSSHRKLMELREAQKIRAQSAHANLDPSTVASNIGYLESGARWGRYEELQHCVYLNALRRQKKPIYGKNLIELLTIGTDKRPYKPRPKIPRQVLAWFEEESTLVQSMIPTVNQRADSFKTIIEKFSCVTPAVVTRDMEQFVLGRKGIEAFSDEDLKLSAPVRWAPFLPKEAPPDPWHEGRMRLSIQFPDKRLLQYDCGKLQILDKLLRKLQAGGHRALIFTQMTKVLDILEQFLNIHGHKYLRLDGATKVEQRQILTDRFNNDPRILCFILSTRSGGLGINLTGADTVIFYDQDWNPAMDKQCQDRCHRIGQTRDVHIYRLVSEHTIEANILRKASQKQMLDDVVIQEGEFTTDYFNKLSVRDVLSEKLDSKSEGLDAADAALDRVLGGPDTNNDQRRVGRALEQAEDREDVAAARVAEKEIQADDADFTEKPSNNASGTSTARQGTPAGKSVLDGGLDDIDAPHVEEVLEYNAWGDKMHTIDDYMLGIMAEQLKDTKLELPKDKKKGKKKGKDTRKR.

Positions M1 to P244 are disordered. Composition is skewed to basic and acidic residues over residues S14 to Q23 and E54 to P68. Residues L126–K155 are compositionally biased toward polar residues. The span at S232–S243 shows a compositional bias: low complexity. The region spanning P335–I409 is the HSA domain. Disordered stretches follow at residues Q457–L615 and M628–I801. Positions Q467 to Q521 are enriched in acidic residues. Over residues V564–A575 the composition is skewed to low complexity. Composition is skewed to acidic residues over residues E576–A612 and E645–E662. A compositionally biased stretch (basic and acidic residues) spans P671–Q692. Composition is skewed to polar residues over residues G706 to N722 and P749 to T778. The region spanning A823–A988 is the Helicase ATP-binding domain. D836–T843 contacts ATP. The short motif at D939–H942 is the DEAH box element. One can recognise a Helicase C-terminal domain in the interval I1375–T1525. Disordered stretches follow at residues E1594–D1632 and D1669–R1691. Residues K1605–Q1618 are compositionally biased toward polar residues. Residues D1677–R1691 show a composition bias toward basic residues.

The protein belongs to the SNF2/RAD54 helicase family. SWR1 subfamily. In terms of assembly, component of the SWR1 chromatin-remodeling complex.

The protein localises to the nucleus. It carries out the reaction ATP + H2O = ADP + phosphate + H(+). Functionally, catalytic component of the SWR1 complex which mediates the ATP-dependent exchange of histone H2A for the H2A variant HZT1 leading to transcriptional regulation of selected genes by chromatin remodeling. The sequence is that of Helicase SWR1 (SWR1) from Gibberella zeae (strain ATCC MYA-4620 / CBS 123657 / FGSC 9075 / NRRL 31084 / PH-1) (Wheat head blight fungus).